Consider the following 726-residue polypeptide: Catalase-peroxidase (726 aa).

The interval 1 to 25 (MDAKTDDSAGKCPFTGGGRRGHRNR) is disordered. A cross-link (tryptophyl-tyrosyl-methioninium (Trp-Tyr) (with M-244)) is located at residues 96–218 (WHSAGTYRIT…LAAVQMGLIY (123 aa)). Histidine 97 acts as the Proton acceptor in catalysis. Positions 218-244 (YVNPEGPNGNPDPVAAAKDIRETFYRM) form a cross-link, tryptophyl-tyrosyl-methioninium (Tyr-Met) (with W-96). Histidine 259 is a binding site for heme b.

It belongs to the peroxidase family. Peroxidase/catalase subfamily. As to quaternary structure, homodimer or homotetramer. It depends on heme b as a cofactor. Post-translationally, formation of the three residue Trp-Tyr-Met cross-link is important for the catalase, but not the peroxidase activity of the enzyme.

It catalyses the reaction H2O2 + AH2 = A + 2 H2O. The enzyme catalyses 2 H2O2 = O2 + 2 H2O. In terms of biological role, bifunctional enzyme with both catalase and broad-spectrum peroxidase activity. In Chelativorans sp. (strain BNC1), this protein is Catalase-peroxidase.